The primary structure comprises 303 residues: Probable 5-dehydro-4-deoxyglucarate dehydratase (303 aa).

Belongs to the DapA family.

It catalyses the reaction 5-dehydro-4-deoxy-D-glucarate + H(+) = 2,5-dioxopentanoate + CO2 + H2O. Its pathway is carbohydrate acid metabolism; D-glucarate degradation; 2,5-dioxopentanoate from D-glucarate: step 2/2. The polypeptide is Probable 5-dehydro-4-deoxyglucarate dehydratase (Acinetobacter baumannii (strain ATCC 17978 / DSM 105126 / CIP 53.77 / LMG 1025 / NCDC KC755 / 5377)).